We begin with the raw amino-acid sequence, 352 residues long: Anthranilate phosphoribosyltransferase (352 aa).

5-phospho-alpha-D-ribose 1-diphosphate is bound by residues glycine 83, 86–87, threonine 91, 93–96, 111–119, and alanine 123; these read GD, NIST, and KHGGRSVSS. Glycine 83 is a binding site for anthranilate. A Mg(2+)-binding site is contributed by serine 95. Position 169 (arginine 169) interacts with anthranilate. Aspartate 228 and glutamate 229 together coordinate Mg(2+).

Belongs to the anthranilate phosphoribosyltransferase family. In terms of assembly, homodimer. It depends on Mg(2+) as a cofactor.

The catalysed reaction is N-(5-phospho-beta-D-ribosyl)anthranilate + diphosphate = 5-phospho-alpha-D-ribose 1-diphosphate + anthranilate. It participates in amino-acid biosynthesis; L-tryptophan biosynthesis; L-tryptophan from chorismate: step 2/5. Functionally, catalyzes the transfer of the phosphoribosyl group of 5-phosphorylribose-1-pyrophosphate (PRPP) to anthranilate to yield N-(5'-phosphoribosyl)-anthranilate (PRA). The sequence is that of Anthranilate phosphoribosyltransferase from Neisseria meningitidis serogroup C (strain 053442).